The following is a 1103-amino-acid chain: Mediator of RNA polymerase II transcription subunit 14 (1103 aa).

Disordered stretches follow at residues Met-1 to Gln-63, Val-120 to Gln-140, and Leu-1054 to Asp-1103. Polar residues predominate over residues Ser-1073–Asp-1103.

Belongs to the Mediator complex subunit 14 family. In terms of assembly, component of the Mediator complex.

It is found in the nucleus. Functionally, component of the Mediator complex, a coactivator involved in the regulated transcription of nearly all RNA polymerase II-dependent genes. Mediator functions as a bridge to convey information from gene-specific regulatory proteins to the basal RNA polymerase II transcription machinery. Mediator is recruited to promoters by direct interactions with regulatory proteins and serves as a scaffold for the assembly of a functional preinitiation complex with RNA polymerase II and the general transcription factors. The protein is Mediator of RNA polymerase II transcription subunit 14 (rgr1) of Aspergillus terreus (strain NIH 2624 / FGSC A1156).